The following is a 476-amino-acid chain: Glutamate--tRNA ligase (476 aa).

Residues 9–19 carry the 'HIGH' region motif; it reads PSPTGTLHIGT. Positions 248-252 match the 'KMSKS' region motif; sequence KLSKR. Residue K251 coordinates ATP.

It belongs to the class-I aminoacyl-tRNA synthetase family. Glutamate--tRNA ligase type 1 subfamily. Monomer.

It is found in the cytoplasm. The catalysed reaction is tRNA(Glu) + L-glutamate + ATP = L-glutamyl-tRNA(Glu) + AMP + diphosphate. Catalyzes the attachment of glutamate to tRNA(Glu) in a two-step reaction: glutamate is first activated by ATP to form Glu-AMP and then transferred to the acceptor end of tRNA(Glu). This is Glutamate--tRNA ligase from Synechococcus sp. (strain CC9311).